The following is a 471-amino-acid chain: ATP synthase subunit beta (471 aa).

153–160 is a binding site for ATP; that stretch reads GGAGVGKT.

This sequence belongs to the ATPase alpha/beta chains family. In terms of assembly, F-type ATPases have 2 components, CF(1) - the catalytic core - and CF(0) - the membrane proton channel. CF(1) has five subunits: alpha(3), beta(3), gamma(1), delta(1), epsilon(1). CF(0) has three main subunits: a(1), b(2) and c(9-12). The alpha and beta chains form an alternating ring which encloses part of the gamma chain. CF(1) is attached to CF(0) by a central stalk formed by the gamma and epsilon chains, while a peripheral stalk is formed by the delta and b chains.

The protein localises to the cell membrane. It catalyses the reaction ATP + H2O + 4 H(+)(in) = ADP + phosphate + 5 H(+)(out). In terms of biological role, produces ATP from ADP in the presence of a proton gradient across the membrane. The catalytic sites are hosted primarily by the beta subunits. This is ATP synthase subunit beta from Levilactobacillus brevis (strain ATCC 367 / BCRC 12310 / CIP 105137 / JCM 1170 / LMG 11437 / NCIMB 947 / NCTC 947) (Lactobacillus brevis).